A 138-amino-acid chain; its full sequence is Actin-related protein 2/3 complex subunit 5 (138 aa).

Residues M1–K21 form a disordered region.

The protein belongs to the ARPC5 family. Component of the Arp2/3 complex composed of arpB/Arp2, arpC/Arp3, arcA/p41-arc, arcB/p34-arc, arcC/p21-arc, arcD/p20-arc and arcE/p16-arc. Interacts with carmil (via the region between the LRR domain and COOH-terminal proline-rich domain); carmil is required for Arp2/3-dependent actin nucleation. Arp2/3 complex, MyoB, MyoC, and the alpha and beta subunits of capping protein all form a larger complex with carmil.

The protein localises to the cytoplasm. The protein resides in the cytoskeleton. It localises to the cytosol. Its subcellular location is the cell cortex. It is found in the cell projection. The protein localises to the pseudopodium. In terms of biological role, functions as a component of the Arp2/3 complex which is involved in regulation of actin polymerization and together with an activating nucleation-promoting factor (NPF) mediates the formation of branched actin networks. Seems to contact the pointed end of the daughter actin filament. The Arp2/3 complex is involved in organizing the actin system in cell motility and chemotaxis, in phagocytosis and macropinocytosis, at late steps of endosome processing, and in mitosis. In concert with a group of other proteins, the Arp2/3 complex plays a general role in the rapid activation and adaptation of the actin system to its multiple functions. The protein is Actin-related protein 2/3 complex subunit 5 (arcE) of Dictyostelium discoideum (Social amoeba).